The following is a 309-amino-acid chain: D-alanine--D-alanine ligase (309 aa).

Positions 106–305 (KMLWKAFGLP…FEQLVVKILE (200 aa)) constitute an ATP-grasp domain. 136–191 (VEKLGLPVMVKPSLEGSSVGLTKVKRVEDLKSAVDFALKYDDTVLIEEWLSGAEFT) contacts ATP. Positions 259, 272, and 274 each coordinate Mg(2+).

It belongs to the D-alanine--D-alanine ligase family. Mg(2+) is required as a cofactor. Mn(2+) serves as cofactor.

The protein resides in the cytoplasm. It carries out the reaction 2 D-alanine + ATP = D-alanyl-D-alanine + ADP + phosphate + H(+). The protein operates within cell wall biogenesis; peptidoglycan biosynthesis. Its function is as follows. Cell wall formation. This is D-alanine--D-alanine ligase from Pasteurella multocida (strain Pm70).